The chain runs to 239 residues: Non-structural protein V (239 aa).

Disordered regions lie at residues 30-104 (PVET…ADEA) and 126-180 (NKSS…HRRE). Over residues 65–74 (TPDRQDRSDK) the composition is skewed to basic and acidic residues. Polar residues-rich tracts occupy residues 89–98 (PATSTDQPPT) and 143–153 (ASSTSDSTAGE). Residues histidine 177, cysteine 196, cysteine 200, cysteine 212, cysteine 214, cysteine 217, cysteine 221, and cysteine 224 each contribute to the Zn(2+) site.

As to quaternary structure, interacts with host STAT1. Interacts with host TXNL1. Interacts (via C-terminus) with host CacyBP; this interaction inhibits host cell apoptosis.

The protein localises to the host cytoplasm. The protein resides in the host nucleus. Its function is as follows. Protects the virus against cell antiviral state by blocking host interferon signaling. Mechanistically, targets host phosphorylated STAT1 (phospho-STAT1) for degradation, thereby inhibiting the interferon alpha signaling pathway. Plays a role in the inhibition of host apoptosis. Interacts with and down-regulates the expression of host TXNL1. In turn, inhibits TXNL1-induced apoptosis through the BCL2-BAX-caspase 3 pathway. Inhibits host apoptosis also by negatively regulating host CacyBP/SIP. Promotes viral replication by activating the extracellular signal-regulated kinase (ERK) pathway. This is Non-structural protein V (P/V) from Gallus gallus (Chicken).